A 308-amino-acid polypeptide reads, in one-letter code: 1D-myo-inositol 2-acetamido-2-deoxy-alpha-D-glucopyranoside deacetylase (308 aa).

Zn(2+) contacts are provided by H18, D21, and H153.

Belongs to the MshB deacetylase family. Zn(2+) is required as a cofactor.

It carries out the reaction 1D-myo-inositol 2-acetamido-2-deoxy-alpha-D-glucopyranoside + H2O = 1D-myo-inositol 2-amino-2-deoxy-alpha-D-glucopyranoside + acetate. Catalyzes the deacetylation of 1D-myo-inositol 2-acetamido-2-deoxy-alpha-D-glucopyranoside (GlcNAc-Ins) in the mycothiol biosynthesis pathway. The protein is 1D-myo-inositol 2-acetamido-2-deoxy-alpha-D-glucopyranoside deacetylase of Salinispora arenicola (strain CNS-205).